Reading from the N-terminus, the 413-residue chain is Intracellular hyaluronan-binding protein 4 (413 aa).

2 positions are modified to phosphoserine: S7 and S36. Residues 40–64 (DILREAERRRQQQLQRKRRDEAAAA) are a coiled coil. A disordered region spans residues 42-206 (LREAERRRQQ…RGGPGNRVFD (165 aa)). The segment covering 62 to 82 (AAAAGAGPRGGRSPAGASGHR) has biased composition (low complexity). R70 bears the Omega-N-methylarginine mark. S74 bears the Phosphoserine mark. Residues 87–97 (GRRESQKERKS) are compositionally biased toward basic and acidic residues. S108 carries the phosphoserine modification. Over residues 139 to 182 (MLERAERRSYREYRPYETERQADFTAEKFPDEKPGDRFDRDRPL) the composition is skewed to basic and acidic residues. A compositionally biased stretch (gly residues) spans 184–201 (GRGGPRGGMRGRGRGGPG). Glycyl lysine isopeptide (Lys-Gly) (interchain with G-Cter in SUMO1); alternate cross-links involve residues K213 and K276. Glycyl lysine isopeptide (Lys-Gly) (interchain with G-Cter in SUMO2); alternate cross-links involve residues K213 and K276. A disordered region spans residues 227–320 (VRTEDNMGGC…IRKPESTVPS (94 aa)). Positions 294 to 315 (DEWKNLQEQTRPKPEFNIRKPE) are enriched in basic and acidic residues. K336 participates in a covalent cross-link: Glycyl lysine isopeptide (Lys-Gly) (interchain with G-Cter in SUMO1); alternate. K336 is covalently cross-linked (Glycyl lysine isopeptide (Lys-Gly) (interchain with G-Cter in SUMO2); alternate). Residues T354 and T375 each carry the phosphothreonine; by PKC modification. The segment at 360–413 (NFGNLPRPGRGARGGTRGGRGRIRRAENYGPRAEVVMQDVAPNPDDPEDFPALS) is disordered. Over residues 404 to 413 (DDPEDFPALS) the composition is skewed to acidic residues.

It belongs to the SERBP1-HABP4 family. As to quaternary structure, associates with ribosomes; promoting ribosome stabilization. Interacts with EEF2/eEF2; promoting ribosome stabilization. Interacts with FMR1. Interacts with FXR1 and FXR2. Interacts with CHD3 (via C-terminus). Interacts (via C-terminus) with RACK1. Interacts with p53/TP53. Interacts (via N-terminus) with SRSF9; this interaction is direct. Interacts with SYNCRIP; this interaction is direct. Interacts with MEF2C (via N-terminus); this interaction decreases DNA-binding activity of MEF2C in myocardial cells in response to mechanical stress. Interacts with PRMT1 (via N-terminus). Interacts with SPIN1. Methylated. Methylation is decreased by phorbol 12-myristate 13-acetate (PMA)-activated PKC, in vitro. In terms of processing, phosphorylated by phorbol 12-myristate 13-acetate (PMA)-activated PKC isoforms at Thr-354 and Thr-375. As to expression, highly expressed in brain, heart, and kidney, and moderately expressed in skeletal muscle. Also expressed in a variety of tumor cell lines and in activated but not resting leukocytes.

It localises to the nucleus. Its subcellular location is the cytoplasm. The protein resides in the stress granule. It is found in the sarcoplasm. The protein localises to the nuclear body. It localises to the nucleolus. Its subcellular location is the nucleus speckle. The protein resides in the cajal body. It is found in the gem. Ribosome-binding protein that promotes ribosome hibernation, a process during which ribosomes are stabilized in an inactive state and preserved from proteasomal degradation. Acts via its association with EEF2/eEF2 factor at the A-site of the ribosome, promoting ribosome stabilization in an inactive state compatible with storage. Plays a key role in ribosome hibernation in the mature oocyte by promoting ribosome stabilization. Ribosomes, which are produced in large quantities during oogenesis, are stored and translationally repressed in the oocyte and early embryo. Also binds RNA, regulating transcription and pre-mRNA splicing. Binds (via C-terminus) to poly(U) RNA. Seems to play a role in PML-nuclear bodies formation. Negatively regulates DNA-binding activity of the transcription factor MEF2C in myocardial cells in response to mechanical stress. The sequence is that of Intracellular hyaluronan-binding protein 4 from Homo sapiens (Human).